The primary structure comprises 661 residues: Arginine--tRNA ligase, cytoplasmic (661 aa).

Met1 carries the N-acetylmethionine modification. Positions 1–73 (MDGLVAQCSA…AEKRRRPTKN (73 aa)) are could be involved in the assembly of the multisynthetase complex. L-arginine contacts are provided by residues 201–203 (SPN), His212, Tyr385, Asp389, and Gln413. The 'HIGH' region signature appears at 202-213 (PNIAKEMHVGHL). The interval 530 to 544 (NTAAYLLYAFTRIRS) is interaction with tRNA.

It belongs to the class-I aminoacyl-tRNA synthetase family. Interacts (via N-terminus) with AIMP1 (via N-terminus); this stimulates its catalytic activity. Interacts (via N-terminus) with LARS2 (via C-terminus). Monomer. Part of a multisubunit complex that groups tRNA ligases for Arg (RARS1), Asp (DARS1), Gln (QARS1), Ile (IARS1), Leu (LARS1), Lys (KARS1), Met (MARS1) the bifunctional ligase for Glu and Pro (EPRS1) and the auxiliary subunits AIMP1/p43, AIMP2/p38 and EEF1E1/p18. Interacts with QARS1. Part of a complex composed of RARS1, QARS1 and AIMP1.

It is found in the cytoplasm. Its subcellular location is the cytosol. It catalyses the reaction tRNA(Arg) + L-arginine + ATP = L-arginyl-tRNA(Arg) + AMP + diphosphate. Forms part of a macromolecular complex that catalyzes the attachment of specific amino acids to cognate tRNAs during protein synthesis. Modulates the secretion of AIMP1 and may be involved in generation of the inflammatory cytokine EMAP2 from AIMP1. The polypeptide is Arginine--tRNA ligase, cytoplasmic (RARS1) (Cricetulus griseus (Chinese hamster)).